The primary structure comprises 260 residues: Pyridoxine 5'-phosphate synthase (260 aa).

Residue Asn15 participates in 3-amino-2-oxopropyl phosphate binding. 17–18 lines the 1-deoxy-D-xylulose 5-phosphate pocket; that stretch reads DH. A 3-amino-2-oxopropyl phosphate-binding site is contributed by Arg26. His51 acts as the Proton acceptor in catalysis. Residues Arg53 and His58 each coordinate 1-deoxy-D-xylulose 5-phosphate. Residue Glu78 is the Proton acceptor of the active site. Position 108 (Thr108) interacts with 1-deoxy-D-xylulose 5-phosphate. His199 serves as the catalytic Proton donor. 3-amino-2-oxopropyl phosphate contacts are provided by residues Gly200 and 221–222; that span reads GH.

This sequence belongs to the PNP synthase family. In terms of assembly, homooctamer; tetramer of dimers.

The protein resides in the cytoplasm. It catalyses the reaction 3-amino-2-oxopropyl phosphate + 1-deoxy-D-xylulose 5-phosphate = pyridoxine 5'-phosphate + phosphate + 2 H2O + H(+). The protein operates within cofactor biosynthesis; pyridoxine 5'-phosphate biosynthesis; pyridoxine 5'-phosphate from D-erythrose 4-phosphate: step 5/5. Catalyzes the complicated ring closure reaction between the two acyclic compounds 1-deoxy-D-xylulose-5-phosphate (DXP) and 3-amino-2-oxopropyl phosphate (1-amino-acetone-3-phosphate or AAP) to form pyridoxine 5'-phosphate (PNP) and inorganic phosphate. In Cupriavidus taiwanensis (strain DSM 17343 / BCRC 17206 / CCUG 44338 / CIP 107171 / LMG 19424 / R1) (Ralstonia taiwanensis (strain LMG 19424)), this protein is Pyridoxine 5'-phosphate synthase.